A 79-amino-acid polypeptide reads, in one-letter code: Bacteriochlorophyll c-binding protein (79 aa).

H25 lines the a bacteriochlorophyll c pocket.

It belongs to the BChl C/E-binding protein family.

Its subcellular location is the chlorosome. The protein localises to the chlorosome envelope. Functionally, component of the photosynthetic apparatus. The light harvesting B740 complex binds bacteriochlorophyll c. The polypeptide is Bacteriochlorophyll c-binding protein (csmA) (Chlorobaculum tepidum (strain ATCC 49652 / DSM 12025 / NBRC 103806 / TLS) (Chlorobium tepidum)).